A 648-amino-acid chain; its full sequence is Biosynthetic arginine decarboxylase (648 aa).

Lysine 109 is subject to N6-(pyridoxal phosphate)lysine. Residue 291–301 (IDVGGGLGIDF) coordinates substrate.

The protein belongs to the Orn/Lys/Arg decarboxylase class-II family. SpeA subfamily. Requires Mg(2+) as cofactor. It depends on pyridoxal 5'-phosphate as a cofactor.

The catalysed reaction is L-arginine + H(+) = agmatine + CO2. Its function is as follows. Catalyzes the biosynthesis of agmatine from arginine. This chain is Biosynthetic arginine decarboxylase, found in Prochlorococcus marinus subsp. pastoris (strain CCMP1986 / NIES-2087 / MED4).